We begin with the raw amino-acid sequence, 122 residues long: Alkaline proteinase inhibitor (122 aa).

Residues 1-25 form the signal peptide; sequence MPRFSHLIGCVWQVLFVSAGAQAMA. The tract at residues 101–122 is disordered; the sequence is QKEGEYTGRTPSGADVTLQRTN.

It belongs to the protease inhibitor I38 family.

The protein resides in the periplasm. Inhibitor of the alkaline protease. In Pseudomonas tolaasii, this protein is Alkaline proteinase inhibitor (inh).